Here is a 488-residue protein sequence, read N- to C-terminus: MMNKDQALIFELSKPGRVGHSLPELDVLEQPVETLIPAEFLREEAPELPEVSELQLMRHYTALSKRNHGVDSGFYPLGSCTMKYNPKINEDVARYPGFANIHPYQPEAQVQGALRLMYELQTALAEITGMDEVTLQPAAGAQGEWTGLMLIRAYHEANGDTNRTKVIVPDSAHGTNPASATVAGFESVTVRTDEDGLVDLDHLREVVGEDTAALMLTNPNTLGLFEAHIVEMAAIIHEAGGKLYYDGANSNAILGIARPGDMGFDVVHLNLHKTFTGPHGGGGPGSGPVGVKKELIPYLPKPVVVKDGDSYRLDYDRPHSIGRVKPYYGNFGINVRAYTYIRTMGPEGLRTVSEYAVLNANYMMRRLAPYFDLPYDQHCKHEFVLSGRQQKKLGVRTLDIAKRLLDFGYHPPTIYFPLNVEECLMIEPTETESKETLDEFIEAMIQIAKEAEETPEVVQEAPHHTVIGRLDETTAARKPILRYEKITQ.

Position 273 is an N6-(pyridoxal phosphate)lysine (Lys273).

Belongs to the GcvP family. C-terminal subunit subfamily. As to quaternary structure, the glycine cleavage system is composed of four proteins: P, T, L and H. In this organism, the P 'protein' is a heterodimer of two subunits. It depends on pyridoxal 5'-phosphate as a cofactor.

It carries out the reaction N(6)-[(R)-lipoyl]-L-lysyl-[glycine-cleavage complex H protein] + glycine + H(+) = N(6)-[(R)-S(8)-aminomethyldihydrolipoyl]-L-lysyl-[glycine-cleavage complex H protein] + CO2. Its function is as follows. The glycine cleavage system catalyzes the degradation of glycine. The P protein binds the alpha-amino group of glycine through its pyridoxal phosphate cofactor; CO(2) is released and the remaining methylamine moiety is then transferred to the lipoamide cofactor of the H protein. The chain is Probable glycine dehydrogenase (decarboxylating) subunit 2 from Halalkalibacterium halodurans (strain ATCC BAA-125 / DSM 18197 / FERM 7344 / JCM 9153 / C-125) (Bacillus halodurans).